The chain runs to 241 residues: MFKRLSLYTLLLCLVPFFIWGISYQWHGNSQLTQADYWLYLLTETGSVPYALITCVLFTLLFAFLFKNPKQWILGVIVMGISVIATQAAKTGAKALFEEPRPFTVYLAEQTHSTPENFYKNDRTLRAEIAKNFYSMDAITPAWLVHHYENETGYSFPSGHTIFAATWLMLAVGFTQLLGNRSFKAKLLVVGIAVWGLLMLISRVRLGMHYPIDLLVATLLAWLINSIIFAFLKKKAIFVMK.

A helical membrane pass occupies residues 1–21 (MFKRLSLYTLLLCLVPFFIWG). Residues 22–52 (ISYQWHGNSQLTQADYWLYLLTETGSVPYAL) are Periplasmic-facing. A helical transmembrane segment spans residues 53-62 (ITCVLFTLLF). The Cytoplasmic portion of the chain corresponds to 63-67 (AFLFK). Residues 68 to 91 (NPKQWILGVIVMGISVIATQAAKT) traverse the membrane as a helical segment. The Periplasmic segment spans residues 92 to 158 (GAKALFEEPR…ENETGYSFPS (67 aa)). Positions 94-102 (KALFEEPRP) are phosphatase sequence motif I. The interval 157-160 (PSGH) is phosphatase sequence motif II. The helical transmembrane segment at 159–173 (GHTIFAATWLMLAVG) threads the bilayer. Catalysis depends on histidine 160, which acts as the Proton donor; for a subset of substrates. Residues 174-184 (FTQLLGNRSFK) are Cytoplasmic-facing. The chain crosses the membrane as a helical span at residues 185–204 (AKLLVVGIAVWGLLMLISRV). The interval 202–213 (SRVRLGMHYPID) is phosphatase sequence motif III. The Periplasmic portion of the chain corresponds to 205 to 210 (RLGMHY). Histidine 209 acts as the Nucleophile in catalysis. The helical transmembrane segment at 211–235 (PIDLLVATLLAWLINSIIFAFLKKK) threads the bilayer. Residues 236-241 (AIFVMK) lie on the Cytoplasmic side of the membrane.

Belongs to the PA-phosphatase related phosphoesterase family.

The protein localises to the cell inner membrane. The protein resides in the cell outer membrane. It catalyses the reaction a 1,2-diacyl-sn-glycero-3-phospho-(1'-sn-glycero-3'-phosphate) + H2O = a 1,2-diacyl-sn-glycero-3-phospho-(1'-sn-glycerol) + phosphate. The catalysed reaction is a 1,2-diacyl-sn-glycerol 3-diphosphate + H2O = a 1,2-diacyl-sn-glycero-3-phosphate + phosphate + H(+). The enzyme catalyses a 1,2-diacyl-sn-glycero-3-phosphate + H2O = a 1,2-diacyl-sn-glycerol + phosphate. It carries out the reaction di-trans,octa-cis-undecaprenyl diphosphate + H2O = di-trans,octa-cis-undecaprenyl phosphate + phosphate + H(+). Its pathway is phospholipid metabolism; phosphatidylglycerol biosynthesis; phosphatidylglycerol from CDP-diacylglycerol: step 2/2. Its function is as follows. Catalyzes the dephosphorylation of diacylglycerol diphosphate (DGPP) to phosphatidate (PA) and the subsequent dephosphorylation of PA to diacylglycerol (DAG). Also has undecaprenyl pyrophosphate phosphatase activity, required for the biosynthesis of the lipid carrier undecaprenyl phosphate. Can also use lysophosphatidic acid (LPA) and phosphatidylglycerophosphate as substrates. The pattern of activities varies according to subcellular location, PGP phosphatase activity is higher in the cytoplasmic membrane, whereas PA and LPA phosphatase activities are higher in the outer membrane. Activity is independent of a divalent cation ion and insensitive to inhibition by N-ethylmaleimide. The protein is Phosphatidylglycerophosphatase B (pgpB) of Haemophilus influenzae (strain ATCC 51907 / DSM 11121 / KW20 / Rd).